The primary structure comprises 441 residues: ATP-dependent protease ATPase subunit HslU (441 aa).

Residues Ile18, 60 to 65 (GVGKTE), Asp254, Glu319, and Arg391 each bind ATP.

It belongs to the ClpX chaperone family. HslU subfamily. As to quaternary structure, a double ring-shaped homohexamer of HslV is capped on each side by a ring-shaped HslU homohexamer. The assembly of the HslU/HslV complex is dependent on binding of ATP.

It localises to the cytoplasm. Its function is as follows. ATPase subunit of a proteasome-like degradation complex; this subunit has chaperone activity. The binding of ATP and its subsequent hydrolysis by HslU are essential for unfolding of protein substrates subsequently hydrolyzed by HslV. HslU recognizes the N-terminal part of its protein substrates and unfolds these before they are guided to HslV for hydrolysis. This Shewanella woodyi (strain ATCC 51908 / MS32) protein is ATP-dependent protease ATPase subunit HslU.